We begin with the raw amino-acid sequence, 71 residues long: Small ribosomal subunit protein bS21B (71 aa).

This sequence belongs to the bacterial ribosomal protein bS21 family.

This is Small ribosomal subunit protein bS21B from Rhizobium johnstonii (strain DSM 114642 / LMG 32736 / 3841) (Rhizobium leguminosarum bv. viciae).